We begin with the raw amino-acid sequence, 329 residues long: Thioredoxin-like fold domain-containing protein MRL7L homolog, chloroplastic (329 aa).

A chloroplast-targeting transit peptide spans 1-46 (MALQSCCSSSASVPATCSALCLAEATRAASLFVRPRAAARRLVLAR). The interval 58–91 (AVQLVLGGRARDDGSESESSDDEDDDEPMQMTDE) is disordered. The span at 72–85 (SESESSDDEDDDEP) shows a compositional bias: acidic residues.

The protein localises to the plastid. The protein resides in the chloroplast stroma. Its function is as follows. Plays an essential role in early steps of chloroplast development. Involved in the regulation of plastid gene expression. Required for the proper function of the plastid transcriptional machinery and protein accumulation in thylakoid membranes. May function as molecular chaperone to ensure proper organization of the nucleoids in chloroplasts. This chain is Thioredoxin-like fold domain-containing protein MRL7L homolog, chloroplastic, found in Oryza sativa subsp. japonica (Rice).